A 751-amino-acid polypeptide reads, in one-letter code: Ribosome biogenesis protein ERB1 (751 aa).

Disordered stretches follow at residues 1–140 and 289–336; these read MALT…GNVP and SEPS…DPED. Acidic residues-rich tracts occupy residues 34–92 and 119–129; these read LTDE…SDSD and IEPDYDSDSST. Residues 294–305 are compositionally biased toward pro residues; that stretch reads SQPPPLPAPKRP. Positions 323–336 are enriched in basic and acidic residues; that stretch reads EEEKQEWLKQDPED. 6 WD repeats span residues 410–449, 536–580, 582–621, 622–661, 665–704, and 720–751; these read HPKG…EIRR, PSSG…APFK, IKGA…KTLQ, PGIR…KPYK, YHSR…DLMT, and TDGL…VWCS.

This sequence belongs to the WD repeat BOP1/ERB1 family. As to quaternary structure, component of the NOP7 complex, composed of ERB1, NOP7 and YTM1. The complex is held together by ERB1, which interacts with NOP7 via its N-terminal domain and with YTM1 via a high-affinity interaction between the seven-bladed beta-propeller domains of the 2 proteins. The NOP7 complex associates with the 66S pre-ribosome.

It is found in the nucleus. The protein localises to the nucleolus. Its subcellular location is the nucleoplasm. In terms of biological role, component of the NOP7 complex, which is required for maturation of the 25S and 5.8S ribosomal RNAs and formation of the 60S ribosome. This Coprinopsis cinerea (strain Okayama-7 / 130 / ATCC MYA-4618 / FGSC 9003) (Inky cap fungus) protein is Ribosome biogenesis protein ERB1.